Reading from the N-terminus, the 291-residue chain is MTAITASMVKELRDRTGLAMMECKKALTEANGDIELAIDNLRKSGQAKAAKKAGNIAADGAITIVQDGNKAVLVEVNCQTDFVAKDENFSNFSNAVAKAILASGETDAEKVAELKLEDGQSVEEARIALVQKIGENIQVRRAKIVEGENLAVYKHGLRIGVVVSYTGSAETGKGIAMHVAAFNPVAVSAEAVPADLVAKEKEIAEAKAIESGKPANIVEKMVSGSVEKYLNEVALDRQMYVIDNDKKVADVLKATATNIVEFVRFEVGEGIEKKAEMSFAEEVAAAQAAAK.

The interval 80-83 (TDFV) is involved in Mg(2+) ion dislocation from EF-Tu.

The protein belongs to the EF-Ts family.

The protein localises to the cytoplasm. Functionally, associates with the EF-Tu.GDP complex and induces the exchange of GDP to GTP. It remains bound to the aminoacyl-tRNA.EF-Tu.GTP complex up to the GTP hydrolysis stage on the ribosome. This chain is Elongation factor Ts, found in Acinetobacter baylyi (strain ATCC 33305 / BD413 / ADP1).